The chain runs to 217 residues: Adenylate kinase (217 aa).

Residue 10–15 participates in ATP binding; the sequence is GAGKGT. Residues 30–59 form an NMP region; sequence STGDMFREAIKRGTPLGRQAEVYIKGGRLV. Residues threonine 31, arginine 36, 57–59, 85–88, and glutamine 92 contribute to the AMP site; these read RLV and GFPR. Residues 126 to 163 are LID; it reads GRRVCRQCGATYHVRYNPPAVPGKCDACGQDLVQRADD. Arginine 127 contacts ATP. Positions 130 and 133 each coordinate Zn(2+). 136-137 lines the ATP pocket; sequence TY. Residues cysteine 150 and cysteine 153 each contribute to the Zn(2+) site. Positions 160 and 171 each coordinate AMP. Glutamine 199 provides a ligand contact to ATP.

Belongs to the adenylate kinase family. As to quaternary structure, monomer.

It localises to the cytoplasm. The catalysed reaction is AMP + ATP = 2 ADP. The protein operates within purine metabolism; AMP biosynthesis via salvage pathway; AMP from ADP: step 1/1. Functionally, catalyzes the reversible transfer of the terminal phosphate group between ATP and AMP. Plays an important role in cellular energy homeostasis and in adenine nucleotide metabolism. This is Adenylate kinase from Moorella thermoacetica (strain ATCC 39073 / JCM 9320).